We begin with the raw amino-acid sequence, 332 residues long: DNA-directed RNA polymerase subunit alpha (332 aa).

Residues 1–230 are alpha N-terminal domain (alpha-NTD); it reads MKKITTSAYM…KQMSIFNNVL (230 aa). The segment at 246-332 is alpha C-terminal domain (alpha-CTD); sequence EHSKLLESVE…LRKKISELKS (87 aa).

It belongs to the RNA polymerase alpha chain family. As to quaternary structure, homodimer. The RNAP catalytic core consists of 2 alpha, 1 beta, 1 beta' and 1 omega subunit. When a sigma factor is associated with the core the holoenzyme is formed, which can initiate transcription.

The enzyme catalyses RNA(n) + a ribonucleoside 5'-triphosphate = RNA(n+1) + diphosphate. In terms of biological role, DNA-dependent RNA polymerase catalyzes the transcription of DNA into RNA using the four ribonucleoside triphosphates as substrates. The chain is DNA-directed RNA polymerase subunit alpha from Campylobacter fetus subsp. fetus (strain 82-40).